We begin with the raw amino-acid sequence, 287 residues long: Agamous-like MADS-box protein AGL53 (287 aa).

The region spanning 30–78 is the MADS-box domain; it reads STAKKTTNLSMREQTMFKKALELSTLCNIDVCVIYYGRDGKLIKTWPED. The interval 151–171 is disordered; sequence EFGQTRAVSSTTNPLSPPPSL.

Interacts with MEE14/CBP1.

The protein resides in the nucleus. Its function is as follows. Probable transcription factor that may function in the maintenance of the proper function of the central cell in pollen tube attraction. This is Agamous-like MADS-box protein AGL53 from Arabidopsis thaliana (Mouse-ear cress).